The following is a 210-amino-acid chain: Prolactin (210 aa).

The N-terminal stretch at 1 to 23 (MARRSQGTKLHLAVLCLVVSCHA) is a signal peptide. Cystine bridges form between Cys69/Cys183 and Cys200/Cys210.

This sequence belongs to the somatotropin/prolactin family.

The protein localises to the secreted. The sequence is that of Prolactin (prl) from Oncorhynchus mykiss (Rainbow trout).